The following is a 132-amino-acid chain: Methylglyoxal synthase (132 aa).

One can recognise an MGS-like domain in the interval 1-132 (MNIALIAHDQ…LLEWREIEDK (132 aa)). Positions 8 and 12 each coordinate substrate. The active-site Proton donor/acceptor is the D60. H87 serves as a coordination point for substrate.

It belongs to the methylglyoxal synthase family.

It carries out the reaction dihydroxyacetone phosphate = methylglyoxal + phosphate. Catalyzes the formation of methylglyoxal from dihydroxyacetone phosphate. This chain is Methylglyoxal synthase, found in Thermoanaerobacter pseudethanolicus (strain ATCC 33223 / 39E) (Clostridium thermohydrosulfuricum).